Reading from the N-terminus, the 75-residue chain is Carwaprin-b (75 aa).

The signal sequence occupies residues 1–24 (MSSGGLLLLLGLLTLWAELTPVSS). The WAP domain maps to 27–72 (RPKKPGLCPPRPQKPPCVRECKNDWRCPGEQKCCRYGCIYECRDPI). 4 disulfide bridges follow: Cys-34-Cys-60, Cys-43-Cys-64, Cys-47-Cys-59, and Cys-53-Cys-68.

This sequence belongs to the venom waprin family. Expressed by the venom gland.

Its subcellular location is the secreted. In terms of biological role, damages membranes of susceptible bacteria. Has no hemolytic activity. Not toxic to mice. Does not inhibit the proteinases elastase and cathepsin G. The sequence is that of Carwaprin-b from Tropidechis carinatus (Australian rough-scaled snake).